The sequence spans 162 residues: Ribonuclease H (162 aa).

Residues 6–154 (DMKRVEIFTD…ADRLANQGVE (149 aa)) enclose the RNase H type-1 domain. 4 residues coordinate Mg(2+): D15, E53, D82, and D146.

This sequence belongs to the RNase H family. Monomer. The cofactor is Mg(2+).

Its subcellular location is the cytoplasm. The catalysed reaction is Endonucleolytic cleavage to 5'-phosphomonoester.. Endonuclease that specifically degrades the RNA of RNA-DNA hybrids. In Nitrosomonas eutropha (strain DSM 101675 / C91 / Nm57), this protein is Ribonuclease H.